The sequence spans 236 residues: MRLRRKPWARPELAACDFYVDDPPSYKGRWREFFDNSNPIHLELGCGKGGFISELAADNQNINYIAVDIKSEVLALAKRKIEKEYKERGIQEIKNIRLMSHNIELIDNMLDTVDFIEKIYINFCNPWPKTPYKKKRLTHGKQLIKYKQFLASGAEIWFKTDDDGLFEDSVKYFEENGFIIKYKTWNLHESGFGENVPTEHEIMFSEEGIPIKFLIAEYKQKIHQAVCIGINIKEEN.

S-adenosyl-L-methionine-binding residues include glutamate 43, aspartate 68, asparagine 102, and asparagine 125. Residues lysine 129 and aspartate 161 each coordinate substrate.

The protein belongs to the class I-like SAM-binding methyltransferase superfamily. TrmB family.

The catalysed reaction is guanosine(46) in tRNA + S-adenosyl-L-methionine = N(7)-methylguanosine(46) in tRNA + S-adenosyl-L-homocysteine. It participates in tRNA modification; N(7)-methylguanine-tRNA biosynthesis. Catalyzes the formation of N(7)-methylguanine at position 46 (m7G46) in tRNA. In Ruminiclostridium cellulolyticum (strain ATCC 35319 / DSM 5812 / JCM 6584 / H10) (Clostridium cellulolyticum), this protein is tRNA (guanine-N(7)-)-methyltransferase.